A 165-amino-acid polypeptide reads, in one-letter code: Endoribonuclease YbeY (165 aa).

The Zn(2+) site is built by His130, His134, and His140.

It belongs to the endoribonuclease YbeY family. Zn(2+) is required as a cofactor.

It localises to the cytoplasm. Single strand-specific metallo-endoribonuclease involved in late-stage 70S ribosome quality control and in maturation of the 3' terminus of the 16S rRNA. The chain is Endoribonuclease YbeY from Streptococcus agalactiae serotype Ia (strain ATCC 27591 / A909 / CDC SS700).